Reading from the N-terminus, the 251-residue chain is Triosephosphate isomerase (251 aa).

8 to 10 serves as a coordination point for substrate; it reads NWK. His-97 acts as the Electrophile in catalysis. Glu-170 acts as the Proton acceptor in catalysis. Substrate contacts are provided by residues Gly-176, Ser-215, and 236-237; that span reads GG.

It belongs to the triosephosphate isomerase family. Homodimer.

The protein resides in the cytoplasm. It carries out the reaction D-glyceraldehyde 3-phosphate = dihydroxyacetone phosphate. Its pathway is carbohydrate biosynthesis; gluconeogenesis. The protein operates within carbohydrate degradation; glycolysis; D-glyceraldehyde 3-phosphate from glycerone phosphate: step 1/1. Functionally, involved in the gluconeogenesis. Catalyzes stereospecifically the conversion of dihydroxyacetone phosphate (DHAP) to D-glyceraldehyde-3-phosphate (G3P). This is Triosephosphate isomerase from Nitratidesulfovibrio vulgaris (strain ATCC 29579 / DSM 644 / CCUG 34227 / NCIMB 8303 / VKM B-1760 / Hildenborough) (Desulfovibrio vulgaris).